An 84-amino-acid polypeptide reads, in one-letter code: Cell division topological specificity factor (84 aa).

Belongs to the MinE family.

Its function is as follows. Prevents the cell division inhibition by proteins MinC and MinD at internal division sites while permitting inhibition at polar sites. This ensures cell division at the proper site by restricting the formation of a division septum at the midpoint of the long axis of the cell. The sequence is that of Cell division topological specificity factor from Pseudomonas putida (strain W619).